A 447-amino-acid polypeptide reads, in one-letter code: Acidic leucine-rich nuclear phosphoprotein 32-related protein (447 aa).

LRR repeat units follow at residues 49-70 (NLQHLSVANIGVSSLEQFPRLG), 71-90 (NLQKLILSDNRITVGLEFLV), and 96-117 (SFCDLDLSNNRIQFVEDLAPLA). The 39-residue stretch at 129–167 (CPVTRLKDYRSRVFGLIKTLKYLDKTDAEGNERPESDDE) folds into the LRRCT domain. Residues 155 to 447 (DAEGNERPES…EDDDDDDEER (293 aa)) are disordered. Acidic residues-rich tracts occupy residues 163–194 (ESDDEDDEEDEEDEEEEEEGDEEDPGSGEIDG) and 215–231 (VDVDEDEESDAEDDESE). The segment covering 232-242 (QATGVNGTSYR) has biased composition (polar residues). Composition is skewed to acidic residues over residues 256-277 (VREDDGDDSESGEEEVGEDNDV), 284-309 (EDSENEEDGVDDEEDDEEDEEEEEVD), 336-374 (GDDDEDGDGETGEDDQGVEDDGEFADEDDDVEEEDEESG), 397-415 (PINEDNDPDEEEEVEDDLP), and 433-447 (DDDDGEDDDDDDEER).

The protein belongs to the ANP32 family.

In Arabidopsis thaliana (Mouse-ear cress), this protein is Acidic leucine-rich nuclear phosphoprotein 32-related protein.